The chain runs to 174 residues: RNA pyrophosphohydrolase (174 aa).

Residues 6-149 (GYRPNVGIIL…KRDVYLGALK (144 aa)) form the Nudix hydrolase domain. A Nudix box motif is present at residues 38-59 (GGIKPGESPETAMYRELYEEVG).

The protein belongs to the Nudix hydrolase family. RppH subfamily. The cofactor is a divalent metal cation.

Functionally, accelerates the degradation of transcripts by removing pyrophosphate from the 5'-end of triphosphorylated RNA, leading to a more labile monophosphorylated state that can stimulate subsequent ribonuclease cleavage. The protein is RNA pyrophosphohydrolase of Neisseria meningitidis serogroup A / serotype 4A (strain DSM 15465 / Z2491).